The sequence spans 221 residues: Fanconi anemia core complex-associated protein 24 (221 aa).

Belongs to the multisubunit FA complex composed of FANCA, FANCB, FANCC, FANCE, FANCF, FANCG, FANCL/PHF9, FANCM and FAAP24. Interacts with FANCM.

It is found in the nucleus. In terms of biological role, plays a role in DNA repair through recruitment of the FA core complex to damaged DNA. Regulates FANCD2 monoubiquitination upon DNA damage. Induces chromosomal instability as well as hypersensitivity to DNA cross-linking agents, when repressed. Targets FANCM/FAAP24 complex to the DNA, preferentially to single strand DNA. The polypeptide is Fanconi anemia core complex-associated protein 24 (Mus musculus (Mouse)).